The sequence spans 76 residues: uncharacterized protein (76 aa).

This is an uncharacterized protein from Dictyostelium discoideum (Social amoeba).